Reading from the N-terminus, the 1606-residue chain is Phosphatidylinositol 3,4,5-trisphosphate-dependent Rac exchanger 2 protein (1606 aa).

One can recognise a DH domain in the interval 23-214 (LRVCVLSELQ…KAVCSNINEA (192 aa)). The PH domain maps to 245-361 (EMLMCGVLLK…WFEAILKERE (117 aa)). 2 consecutive DEP domains span residues 390-464 (CRQG…RFRY) and 491-566 (SLFT…FFSD). 2 PDZ domains span residues 592–671 (KSLL…VLVS) and 677–754 (TVKI…QDSI). Positions 1581–1606 (GVRDRTPQSAPRLYKLCEPPPPAGEE) are disordered.

In terms of assembly, interacts with RAC1. As to expression, isoform 1 is highly expressed in skeletal muscle, heart and placenta, absent from peripheral blood leukocytes. Isoform 2 is expressed in skeletal muscle, kidney, small intestine, and placenta. Isoform 3 is expressed in the heart.

Functions as a RAC1 guanine nucleotide exchange factor (GEF), activating Rac proteins by exchanging bound GDP for free GTP. Its activity is synergistically activated by phosphatidylinositol 3,4,5-trisphosphate and the beta gamma subunits of heterotrimeric G protein. Mediates the activation of RAC1 in a PI3K-dependent manner. May be an important mediator of Rac signaling, acting directly downstream of both G protein-coupled receptors and phosphoinositide 3-kinase. The protein is Phosphatidylinositol 3,4,5-trisphosphate-dependent Rac exchanger 2 protein of Homo sapiens (Human).